The chain runs to 289 residues: 2-dehydro-3-deoxyphosphooctonate aldolase (289 aa).

It belongs to the KdsA family.

It localises to the cytoplasm. The enzyme catalyses D-arabinose 5-phosphate + phosphoenolpyruvate + H2O = 3-deoxy-alpha-D-manno-2-octulosonate-8-phosphate + phosphate. Its pathway is carbohydrate biosynthesis; 3-deoxy-D-manno-octulosonate biosynthesis; 3-deoxy-D-manno-octulosonate from D-ribulose 5-phosphate: step 2/3. It participates in bacterial outer membrane biogenesis; lipopolysaccharide biosynthesis. This Cupriavidus taiwanensis (strain DSM 17343 / BCRC 17206 / CCUG 44338 / CIP 107171 / LMG 19424 / R1) (Ralstonia taiwanensis (strain LMG 19424)) protein is 2-dehydro-3-deoxyphosphooctonate aldolase.